A 332-amino-acid chain; its full sequence is Cell growth regulator with RING finger domain protein 1 (332 aa).

The segment at 274 to 309 (CVVCQNGGVNWVLLPCRHACLCDSCVCYFKQCPMCR) adopts an RING-type zinc-finger fold.

Highly expressed in testis, lower levels of expression is seen in skeletal muscle, liver, lung and brain.

The protein resides in the nucleus. It localises to the endoplasmic reticulum. Functionally, able to inhibit growth in several cell lines. This Rattus norvegicus (Rat) protein is Cell growth regulator with RING finger domain protein 1 (Cgrrf1).